Reading from the N-terminus, the 740-residue chain is Probable type IV piliation system protein DR_0774 (740 aa).

An N-terminal signal peptide occupies residues 1–20 (MNKRHALLLTAVLGMATAYA).

This sequence belongs to the bacterial secretin family.

It is found in the cell envelope. Could be part of the type IV piliation system (T4P). May contribute at the cohesion between the S-layer and the outer membrane by forming oligomers. Could also be the main channel through which trafficking is managed. The chain is Probable type IV piliation system protein DR_0774 from Deinococcus radiodurans (strain ATCC 13939 / DSM 20539 / JCM 16871 / CCUG 27074 / LMG 4051 / NBRC 15346 / NCIMB 9279 / VKM B-1422 / R1).